The following is a 790-amino-acid chain: N-methylputrescine oxidase 1, peroxisomal (790 aa).

The tract at residues 1–23 is disordered; it reads MATTKQKVTAPSPSPSSSTASCC. The span at 9-23 shows a compositional bias: low complexity; that stretch reads TAPSPSPSSSTASCC. 423–434 is a substrate binding site; the sequence is AFDAGEDGLGKN. Asp425 (proton acceptor) is an active-site residue. A disulfide bridge connects residues Cys444 and Cys470. Residue 506–511 participates in substrate binding; sequence VANYEY. The active-site Schiff-base intermediate with substrate; via topaquinone is Tyr509. Tyr509 is subject to 2',4',5'-topaquinone. Residues His559 and His561 each contribute to the Cu cation site. Mn(2+)-binding residues include Asp714 and Ile715. His725 lines the Cu cation pocket.

This sequence belongs to the copper/topaquinone oxidase family. In terms of assembly, homodimer. Cu cation is required as a cofactor. It depends on Zn(2+) as a cofactor. The cofactor is L-topaquinone. Post-translationally, topaquinone (TPQ) is generated by copper-dependent autoxidation of a specific tyrosyl residue. Mainly expressed in roots, and, to a lower extent, in stems.

It is found in the peroxisome. It carries out the reaction a primary methyl amine + O2 + H2O = an aldehyde + H2O2 + NH4(+). The enzyme catalyses N-methylputrescine + O2 + H2O = 4-methylaminobutanal + H2O2 + NH4(+). It participates in alkaloid biosynthesis; nicotine biosynthesis. Functionally, involved in the biosynthesis of pyridine alkaloid natural products, leading mainly to the production of anabasine, anatabine, nicotine and nornicotine, effective deterrents against herbivores with antiparasitic and pesticide properties (neurotoxins); nornicotine serves as the precursor in the synthesis of the carcinogen compound N'-nitrosonornicotine (NNN). Amine oxidase which mediates the deamination of N-methylputrescine to produce 4-methylaminobutanal. Oxidizes preferentially N-methylated amines. This is N-methylputrescine oxidase 1, peroxisomal from Nicotiana tabacum (Common tobacco).